The following is a 130-amino-acid chain: Small ribosomal subunit protein uS9 (130 aa).

Belongs to the universal ribosomal protein uS9 family.

The chain is Small ribosomal subunit protein uS9 from Shewanella loihica (strain ATCC BAA-1088 / PV-4).